A 263-amino-acid polypeptide reads, in one-letter code: MRPFEDSPISRDGKVLILAYDHGLEHGPVDFEAVPATKDPEAVWDVATHDAVSAMAAQKGIAEAYYPSYSDDVNLLAKLNGTSNLWMGEPDSAVNWTVDYAADVGADAVGFTLYGGSNSEVEMAEEFRDAQEAARDHDLPVVMWSYPRGQGLKNDKNPDTIAYAARQALELGADIAKVKYPGSTDAMSHAVDMAGPTNVVMSGGSKTSDRDFLESVKGAIDAGASGLAVGRNVWQREHPAAFLDGLEAVVYEEASVDEALGRI.

Lysine 177 acts as the Schiff-base intermediate with dihydroxyacetone-P in catalysis.

It belongs to the DeoC/FbaB aldolase family.

It carries out the reaction beta-D-fructose 1,6-bisphosphate = D-glyceraldehyde 3-phosphate + dihydroxyacetone phosphate. Functionally, has aldolase activity with fructose 1,6-bisphosphate. May play a role in the biosynthesis of aromatic amino acids (AroAA). This chain is Fructose-bisphosphate aldolase class 1 (fba1), found in Halobacterium salinarum (strain ATCC 29341 / DSM 671 / R1).